Consider the following 670-residue polypeptide: tRNA 5-methylaminomethyl-2-thiouridine biosynthesis bifunctional protein MnmC (670 aa).

The segment at 1 to 242 is tRNA (mnm(5)s(2)U34)-methyltransferase; it reads MTFSVQHAEI…KRECLSGLKI (242 aa). Positions 269 to 670 are FAD-dependent cmnm(5)s(2)U34 oxidoreductase; that stretch reads IGGGIASLCA…KKWLKGSKVE (402 aa).

In the N-terminal section; belongs to the methyltransferase superfamily. tRNA (mnm(5)s(2)U34)-methyltransferase family. It in the C-terminal section; belongs to the DAO family. It depends on FAD as a cofactor.

It is found in the cytoplasm. The enzyme catalyses 5-aminomethyl-2-thiouridine(34) in tRNA + S-adenosyl-L-methionine = 5-methylaminomethyl-2-thiouridine(34) in tRNA + S-adenosyl-L-homocysteine + H(+). Its function is as follows. Catalyzes the last two steps in the biosynthesis of 5-methylaminomethyl-2-thiouridine (mnm(5)s(2)U) at the wobble position (U34) in tRNA. Catalyzes the FAD-dependent demodification of cmnm(5)s(2)U34 to nm(5)s(2)U34, followed by the transfer of a methyl group from S-adenosyl-L-methionine to nm(5)s(2)U34, to form mnm(5)s(2)U34. The polypeptide is tRNA 5-methylaminomethyl-2-thiouridine biosynthesis bifunctional protein MnmC (Haemophilus influenzae (strain PittEE)).